Reading from the N-terminus, the 154-residue chain is MKLIEGQLKVVNGKKVAIVSTRWNHFIVDRLVEGAKDAFARHGGDEADLTHVLVPGAFELPMIIDKLLASGKYDAICALGAVIRGATPHFDYVSAEATKGIAMMSLKHQKPVSFGLLTTDNIEQSIERAGTKAGNKGFEAMTVVIEMLDLYENL.

5-amino-6-(D-ribitylamino)uracil is bound by residues W23, 57 to 59 (AFE), and 81 to 83 (AVI). 86–87 (AT) serves as a coordination point for (2S)-2-hydroxy-3-oxobutyl phosphate. The Proton donor role is filled by H89. Position 114 (F114) interacts with 5-amino-6-(D-ribitylamino)uracil. Residue R128 coordinates (2S)-2-hydroxy-3-oxobutyl phosphate.

The protein belongs to the DMRL synthase family.

It carries out the reaction (2S)-2-hydroxy-3-oxobutyl phosphate + 5-amino-6-(D-ribitylamino)uracil = 6,7-dimethyl-8-(1-D-ribityl)lumazine + phosphate + 2 H2O + H(+). It participates in cofactor biosynthesis; riboflavin biosynthesis; riboflavin from 2-hydroxy-3-oxobutyl phosphate and 5-amino-6-(D-ribitylamino)uracil: step 1/2. In terms of biological role, catalyzes the formation of 6,7-dimethyl-8-ribityllumazine by condensation of 5-amino-6-(D-ribitylamino)uracil with 3,4-dihydroxy-2-butanone 4-phosphate. This is the penultimate step in the biosynthesis of riboflavin. This Sulfurimonas denitrificans (strain ATCC 33889 / DSM 1251) (Thiomicrospira denitrificans (strain ATCC 33889 / DSM 1251)) protein is 6,7-dimethyl-8-ribityllumazine synthase.